The primary structure comprises 1078 residues: Transmembrane protein 132B (1078 aa).

Over M1 to A903 the chain is Extracellular. 3 N-linked (GlcNAc...) asparagine glycosylation sites follow: N343, N366, and N381. Positions R834 to L887 are disordered. Over residues E841 to S852 the composition is skewed to polar residues. A helical membrane pass occupies residues L904–W924. The Cytoplasmic segment spans residues K925–M1078.

This sequence belongs to the TMEM132 family.

Its subcellular location is the membrane. This Homo sapiens (Human) protein is Transmembrane protein 132B (TMEM132B).